The following is a 962-amino-acid chain: Villin-5 (962 aa).

Gelsolin-like repeat units follow at residues 29 to 79 (FKPV…DEAG), 150 to 190 (VRVK…QERA), 262 to 305 (GQTD…DQRK), 396 to 453 (LQVW…EDRA), 534 to 574 (MQAI…EDQE), and 636 to 677 (LKAT…KKKP). Residues 749 to 785 (KPKRRVPAYSSRSTVPDKSQPRSRSMTFSPDRARVRG) are disordered. Residues 758-776 (SSRSTVPDKSQPRSRSMTF) are compositionally biased toward polar residues. Phosphoserine is present on residues Ser-777 and Ser-787. The segment covering 845–862 (EKPTPTSQEPPTSPSSSE) has biased composition (low complexity). The disordered stretch occupies residues 845–917 (EKPTPTSQEP…LKTDSEDPVS (73 aa)). Residues 863–875 (ATNQAEAPKSTSE) are compositionally biased toward polar residues. The residue at position 883 (Ser-883) is a Phosphoserine. Residues 889 to 898 (SKEEEAEEES) show a composition bias toward acidic residues. One can recognise an HP domain in the interval 897–962 (ESSLPTFPYE…NKLKMSVNLF (66 aa)).

It belongs to the villin/gelsolin family. Ubiquitous, but expressed preferentially in pollen and stamens.

The protein localises to the cytoplasm. It is found in the cytoskeleton. In terms of biological role, major actin filament stabilizing factor and regulator of actin dynamics. Binds actin and actin filament bundles in a Ca(2+)-insensitive manner, but caps the barbed end of actin filaments and is able to sever them in a calcium-dependent manner. Required for the construction of actin collars in pollen tubes. Acts synergistically with VLN2 (AC O81644) to regulate polarized pollen tube growth. The sequence is that of Villin-5 from Arabidopsis thaliana (Mouse-ear cress).